Consider the following 675-residue polypeptide: DNA ligase (675 aa).

Residues 32–36 (DAEYD), 81–82 (SL), and Glu113 each bind NAD(+). Lys115 (N6-AMP-lysine intermediate) is an active-site residue. 4 residues coordinate NAD(+): Arg136, Glu173, Lys291, and Lys315. Residues Cys409, Cys412, Cys427, and Cys433 each contribute to the Zn(2+) site. Residues 595-675 (SEKTYFFNKK…ELNSLIRIKE (81 aa)) form the BRCT domain.

The protein belongs to the NAD-dependent DNA ligase family. LigA subfamily. Requires Mg(2+) as cofactor. Mn(2+) is required as a cofactor.

The enzyme catalyses NAD(+) + (deoxyribonucleotide)n-3'-hydroxyl + 5'-phospho-(deoxyribonucleotide)m = (deoxyribonucleotide)n+m + AMP + beta-nicotinamide D-nucleotide.. Its function is as follows. DNA ligase that catalyzes the formation of phosphodiester linkages between 5'-phosphoryl and 3'-hydroxyl groups in double-stranded DNA using NAD as a coenzyme and as the energy source for the reaction. It is essential for DNA replication and repair of damaged DNA. The protein is DNA ligase of Buchnera aphidicola subsp. Acyrthosiphon pisum (strain APS) (Acyrthosiphon pisum symbiotic bacterium).